We begin with the raw amino-acid sequence, 269 residues long: Phosphonoacetaldehyde hydrolase (269 aa).

Aspartate 10 serves as the catalytic Nucleophile. The Mg(2+) site is built by aspartate 10 and alanine 12. The active-site Schiff-base intermediate with substrate is the lysine 52. Position 186 (aspartate 186) interacts with Mg(2+).

The protein belongs to the HAD-like hydrolase superfamily. PhnX family. In terms of assembly, homodimer. It depends on Mg(2+) as a cofactor.

The enzyme catalyses phosphonoacetaldehyde + H2O = acetaldehyde + phosphate + H(+). Functionally, involved in phosphonate degradation. The protein is Phosphonoacetaldehyde hydrolase of Salmonella heidelberg (strain SL476).